A 352-amino-acid chain; its full sequence is fMet-Leu-Phe receptor (352 aa).

The Extracellular portion of the chain corresponds to Met1–Val27. N-linked (GlcNAc...) asparagine glycans are attached at residues Asn4 and Asn10. Residues Phe28 to Val50 form a helical membrane-spanning segment. The Cytoplasmic portion of the chain corresponds to Thr51–Thr61. Residues Ile62–Val83 form a helical membrane-spanning segment. Residues Thr84–Phe100 lie on the Extracellular side of the membrane. Residues Cys98 and Cys178 are joined by a disulfide bond. The chain crosses the membrane as a helical span at residues Val101–Leu121. The Cytoplasmic portion of the chain corresponds to Asp122–Ser140. Residues Leu141 to Ile162 traverse the membrane as a helical segment. Residues Arg163–Arg207 are Extracellular-facing. Residues Phe208 to Thr228 traverse the membrane as a helical segment. The Cytoplasmic portion of the chain corresponds to Lys229 to Val244. The helical transmembrane segment at Leu245–Val268 threads the bilayer. At Arg269 to Val287 the chain is on the extracellular side. A helical transmembrane segment spans residues Thr288–Gly307. Topologically, residues Gln308 to Ile352 are cytoplasmic.

The protein belongs to the G-protein coupled receptor 1 family. Phosphorylated; which is necessary for desensitization. In terms of tissue distribution, neutrophils.

It is found in the cell membrane. Its function is as follows. High affinity receptor for N-formyl-methionyl peptides (fMLP), which are powerful neutrophil chemotactic factors. Binding of fMLP to the receptor stimulates intracellular calcium mobilization and superoxide anion release. This response is mediated via a G-protein that activates a phosphatidylinositol-calcium second messenger system. Receptor for TAFA4, mediates its effects on chemoattracting macrophages, promoting phagocytosis and increasing ROS release. Receptor for cathepsin CTSG, leading to increased phagocyte chemotaxis. In Oryctolagus cuniculus (Rabbit), this protein is fMet-Leu-Phe receptor (FPR1).